The chain runs to 577 residues: Arginine--tRNA ligase (577 aa).

Residues 122 to 132 carry the 'HIGH' region motif; it reads PNVAKEMHVGH.

The protein belongs to the class-I aminoacyl-tRNA synthetase family. As to quaternary structure, monomer.

The protein localises to the cytoplasm. The catalysed reaction is tRNA(Arg) + L-arginine + ATP = L-arginyl-tRNA(Arg) + AMP + diphosphate. The sequence is that of Arginine--tRNA ligase from Aliivibrio salmonicida (strain LFI1238) (Vibrio salmonicida (strain LFI1238)).